The sequence spans 283 residues: 4-diphosphocytidyl-2-C-methyl-D-erythritol kinase (283 aa).

Lys-8 is an active-site residue. 90–100 (PIGSGLAGGSS) lines the ATP pocket. The active site involves Asp-132.

Belongs to the GHMP kinase family. IspE subfamily.

It carries out the reaction 4-CDP-2-C-methyl-D-erythritol + ATP = 4-CDP-2-C-methyl-D-erythritol 2-phosphate + ADP + H(+). The protein operates within isoprenoid biosynthesis; isopentenyl diphosphate biosynthesis via DXP pathway; isopentenyl diphosphate from 1-deoxy-D-xylulose 5-phosphate: step 3/6. Functionally, catalyzes the phosphorylation of the position 2 hydroxy group of 4-diphosphocytidyl-2C-methyl-D-erythritol. This is 4-diphosphocytidyl-2-C-methyl-D-erythritol kinase from Chlamydia muridarum (strain MoPn / Nigg).